Consider the following 76-residue polypeptide: Dermaseptin-H1 (76 aa).

The signal sequence occupies residues 1-22 (MDILKKSLFIVLFLGLVSLSIC). Positions 23–45 (EEEKRENEDEEEQEDDEQSEEKR) are excised as a propeptide. The disordered stretch occupies residues 25–44 (EKRENEDEEEQEDDEQSEEK). Positions 30–41 (EDEEEQEDDEQS) are enriched in acidic residues. Q73 is subject to Glutamine amide. Positions 75–76 (EQ) are excised as a propeptide.

As to expression, expressed by the skin glands.

Its subcellular location is the secreted. Has antimicrobial activity. This Pithecopus hypochondrialis (Orange-legged leaf frog) protein is Dermaseptin-H1.